We begin with the raw amino-acid sequence, 813 residues long: MARKSIRGKEVVMVSDDDDDDDDVDDDKNIIKCVKPLTVYKNLETPTDSDDNDDDDDDVDVDENIIKYIKPVAVYKKLETRSKNNPYFLRRSLKYIIQAKKKKKSNSGGKIRFNYRDVSNKMTLKAEVVENFSCPFCLIPCGGHEGLQLHLKSSHDAFKFEFYRAEKDHGPEVDVSVKSDTIKFGVLKDDVGNPQLSPLTFCSKNRNQRRQRDDSNNVKKLNVLLMELDLDDLPRGTENDSTHVNDDNVSSPPRAHSSEKISDILTTTQLAIAESSEPKVPHVNDGNVSSPPRAHSSAEKNESTHVNDDDDVSSPPRAHSLEKNESTHVNEDNISSPPKAHSSKKNESTHMNDEDVSFPPRTRSSKETSDILTTTQPAIVEPSEPKVRRGSRRKQLYAKRYKARETQPAIAESSEPKVLHVNDENVSSPPEAHSLEKASDILTTTQPAIAESSEPKVPHVNDENVSSTPRAHSSKKNKSTRKNVDNVPSPPKTRSSKKTSDILTTTQPTIAESSEPKVRHVNDDNVSSTPRAHSSKKNKSTRKNDDNIPSPPKTRSSKKTSNILTRTQPAIAESEPKVPHVNDDKVSSTPRAHSSKKNKSTHKKDDNASLPPKTRSSKKTSDILATTQPAKAEPSEPKVTRVSRRKELHAERCEAKRLERLKGRQFYHSQTMQPMTFEQVMSNEDSENETDDYALDISERLRLERLVGVSKEEKRYMYLWNIFVRKQRVIADGHVPWACEEFAKLHKEEMKNSSSFDWWWRMFRIKLWNNGLICAKTFHKCTTILLSNSDEAGQFTSGSAANANNQQSMEVDE.

The tract at residues 1-27 (MARKSIRGKEVVMVSDDDDDDDDVDDD) is disordered. The segment covering 15–26 (SDDDDDDDDVDD) has biased composition (acidic residues). The C2H2-type zinc-finger motif lies at 134 to 155 (CPFCLIPCGGHEGLQLHLKSSH). Disordered regions lie at residues 197–216 (SPLTFCSKNRNQRRQRDDSN), 232–261 (DLPRGTENDSTHVNDDNVSSPPRAHSSEKI), and 274–648 (ESSE…RKEL). Residues 232 to 246 (DLPRGTENDSTHVND) show a composition bias toward basic and acidic residues. An A-1 repeat occupies 243-264 (HVNDDNVSSPPRAHSSEKISDI). Residues 243–542 (HVNDDNVSSP…HSSKKNKSTR (300 aa)) are 12 X approximate repeat A. The B-1 repeat unit spans residues 265-281 (LTTTQLAIAESSEPKVP). Positions 265–640 (LTTTQLAIAE…KAEPSEPKVT (376 aa)) are 7 X approximate repeat B. One copy of the A-2 repeat lies at 282-304 (HVNDGNVSSPPRAHSSAEKNEST). Composition is skewed to basic and acidic residues over residues 296-307 (SSAEKNESTHVN), 319-331 (HSLEKNESTHVNE), and 344-353 (KKNESTHMND). Residues 305–327 (HVNDDDDVSSPPRAHSLEKNEST) form an A-3 repeat. An A-4 repeat occupies 328 to 349 (HVNEDNISSPPKAHSSKKNEST). The A-5 repeat unit spans residues 350 to 371 (HMNDEDVSFPPRTRSSKETSDI). Residues 372-388 (LTTTQPAIVEPSEPKVR) form a B-2 repeat. The span at 388-402 (RRGSRRKQLYAKRYK) shows a compositional bias: basic residues. A B-3 repeat occupies 403–419 (ARETQPAIAESSEPKVL). Composition is skewed to basic and acidic residues over residues 414–423 (SEPKVLHVND) and 453–462 (SEPKVPHVND). An A-6 repeat occupies 420–441 (HVNDENVSSPPEAHSLEKASDI). A B-4 repeat occupies 442–458 (LTTTQPAIAESSEPKVP). The A-7 repeat unit spans residues 459 to 481 (HVNDENVSSTPRAHSSKKNKSTR). The span at 472–481 (HSSKKNKSTR) shows a compositional bias: basic residues. The stretch at 482-502 (KNVDNVPSPPKTRSSKKTSDI) is one A-8 repeat. The segment covering 501-512 (DILTTTQPTIAE) has biased composition (polar residues). The B-5 repeat unit spans residues 503-519 (LTTTQPTIAESSEPKVR). A compositionally biased stretch (basic and acidic residues) spans 514-523 (SEPKVRHVND). An A-9 repeat occupies 520 to 542 (HVNDDNVSSTPRAHSSKKNKSTR). Residues 543–563 (KNDDNIPSPPKTRSSKKTSNI) form an A-10 repeat. A B-6 repeat occupies 564-579 (LTRTQPAIAESEPKVP). Residues 574–586 (SEPKVPHVNDDKV) show a composition bias toward basic and acidic residues. One copy of the A-11 repeat lies at 580 to 601 (HVNDDKVSSTPRAHSSKKNKST). Residues 593–602 (HSSKKNKSTH) are compositionally biased toward basic residues. An A-12 repeat occupies 602 to 623 (HKKDDNASLPPKTRSSKKTSDI). The B-7 repeat unit spans residues 624–640 (LATTQPAKAEPSEPKVT). Positions 648 to 783 (LHAERCEAKR…CAKTFHKCTT (136 aa)) are VEFS-box.

The protein belongs to the VEFS (VRN2-EMF2-FIS2-SU(Z)12) family. As to quaternary structure, probably indirectly associated with FIE and/or MEA. In plants, PcG complexes are probably composed of a member of the EZ family (CLF or MEA), FIE, and a member of the VEFS family (FIS2, VRN2 or EMF2). As to expression, weakly expressed. Expressed in late siliques.

Its subcellular location is the nucleus. Its function is as follows. Polycomb group (PcG) protein. PcG proteins act by forming multiprotein complexes, which are required to maintain the transcriptionally repressive state of homeotic genes throughout development. PcG proteins are not required to initiate repression, but to maintain it during later stages of development. They probably act via the methylation of histones, rendering chromatin heritably changed in its expressibility. Required to prevent the proliferation of the central cell by repressing unknown target genes before fertilization. Regulates the anteroposterior organization of the endosperm. The sequence is that of Polycomb group protein FERTILIZATION-INDEPENDENT SEED 2 from Arabidopsis thaliana (Mouse-ear cress).